Consider the following 391-residue polypeptide: Rhizopuspepsin-3 (391 aa).

The first 21 residues, 1 to 21, serve as a signal peptide directing secretion; the sequence is MKFTLISSCVTLALMTLSIEA. The propeptide at 22–68 is activation peptide; that stretch reads APSGKKVNIPLTKNKDYKPNAKNAIQKAIAKYHRHRSVSSSNSTSTD. The Peptidase A1 domain maps to 84-388; the sequence is YYGEVTVGTP…NPEVPHVQIA (305 aa). Aspartate 102 is a catalytic residue. Residues cysteine 115 and cysteine 118 are joined by a disulfide bond. Aspartate 285 is a catalytic residue. An intrachain disulfide couples cysteine 319 to cysteine 352.

Belongs to the peptidase A1 family.

The enzyme catalyses Hydrolysis of proteins with broad specificity similar to that of pepsin A, preferring hydrophobic residues at P1 and P1'. Clots milk and activates trypsinogen. Does not cleave 4-Gln-|-His-5, but does cleave 10-His-|-Leu-11 and 12-Val-|-Glu-13 in B chain of insulin.. In Rhizopus niveus, this protein is Rhizopuspepsin-3.